A 97-amino-acid polypeptide reads, in one-letter code: Small ribosomal subunit protein bS6 (97 aa).

This sequence belongs to the bacterial ribosomal protein bS6 family.

In terms of biological role, binds together with bS18 to 16S ribosomal RNA. The polypeptide is Small ribosomal subunit protein bS6 (Limosilactobacillus fermentum (strain NBRC 3956 / LMG 18251) (Lactobacillus fermentum)).